Here is a 457-residue protein sequence, read N- to C-terminus: Argininosuccinate lyase (457 aa).

The protein belongs to the lyase 1 family. Argininosuccinate lyase subfamily.

It localises to the cytoplasm. The enzyme catalyses 2-(N(omega)-L-arginino)succinate = fumarate + L-arginine. It functions in the pathway amino-acid biosynthesis; L-arginine biosynthesis; L-arginine from L-ornithine and carbamoyl phosphate: step 3/3. This Escherichia coli O1:K1 / APEC protein is Argininosuccinate lyase.